A 412-amino-acid polypeptide reads, in one-letter code: Zinc finger protein 821 (412 aa).

The tract at residues 26 to 83 is disordered; it reads RQAMMKTDFPGDLGSQRQAIQQLRDQDSSSSDSEGDEEETTQDEVSSHTSEEDGGVVK. The span at 58–67 shows a compositional bias: acidic residues; the sequence is SEGDEEETTQ. 2 C2H2-type zinc fingers span residues 116 to 140 and 150 to 172; these read GLCQ…VYQH and YMCP…LLIH. A coiled-coil region spans residues 257 to 366; it reads KWALRRQNEP…EKMDMMLRAQ (110 aa). The tract at residues 278-319 is disordered; that stretch reads RTAKKSRRDNETPEEREVRRMRDREAKRLQRMQETDEQRARR.

It belongs to the krueppel C2H2-type zinc-finger protein family.

Its subcellular location is the nucleus. May be involved in transcriptional regulation. This chain is Zinc finger protein 821 (ZNF821), found in Bos taurus (Bovine).